The sequence spans 405 residues: Multifunctional CCA protein (405 aa).

Residues G8 and R11 each contribute to the ATP site. Residues G8 and R11 each coordinate CTP. Positions 21 and 23 each coordinate Mg(2+). ATP contacts are provided by R91, R137, and R140. Residues R91, R137, and R140 each coordinate CTP. The HD domain occupies 228 to 329; that stretch reads TGIHSMMVLE…NDFLDKCDVW (102 aa).

It belongs to the tRNA nucleotidyltransferase/poly(A) polymerase family. Bacterial CCA-adding enzyme type 1 subfamily. As to quaternary structure, monomer. Can also form homodimers and oligomers. Mg(2+) is required as a cofactor. It depends on Ni(2+) as a cofactor.

It carries out the reaction a tRNA precursor + 2 CTP + ATP = a tRNA with a 3' CCA end + 3 diphosphate. The enzyme catalyses a tRNA with a 3' CCA end + 2 CTP + ATP = a tRNA with a 3' CCACCA end + 3 diphosphate. Catalyzes the addition and repair of the essential 3'-terminal CCA sequence in tRNAs without using a nucleic acid template. Adds these three nucleotides in the order of C, C, and A to the tRNA nucleotide-73, using CTP and ATP as substrates and producing inorganic pyrophosphate. tRNA 3'-terminal CCA addition is required both for tRNA processing and repair. Also involved in tRNA surveillance by mediating tandem CCA addition to generate a CCACCA at the 3' terminus of unstable tRNAs. While stable tRNAs receive only 3'-terminal CCA, unstable tRNAs are marked with CCACCA and rapidly degraded. In Pseudoalteromonas atlantica (strain T6c / ATCC BAA-1087), this protein is Multifunctional CCA protein.